The primary structure comprises 360 residues: Popeye domain-containing protein 1 (360 aa).

Over 1 to 48 the chain is Extracellular; the sequence is MNYTESSPLRESTAIGFTPELESIIPVPSNKTTCENWREIHHLVFHVA. N-linked (GlcNAc...) asparagine glycans are attached at residues asparagine 2 and asparagine 30. Residues 49–69 form a helical membrane-spanning segment; it reads NICFAVGLVIPTTLHLHMIFL. Position 70 (arginine 70) is a topological domain, cytoplasmic. The chain crosses the membrane as a helical span at residues 71–91; it reads GMLTLGCTLYIVWATLYRCAL. Aspartate 92 is a topological domain (extracellular). The helical transmembrane segment at 93–113 threads the bilayer; sequence IMIWNSVFLGVNILHLSYLLY. The segment at 93–115 is required for interaction with CAV3; it reads IMIWNSVFLGVNILHLSYLLYKK. The Cytoplasmic portion of the chain corresponds to 114-360; it reads KKRPVKIEKE…PNTLKVHQLP (247 aa). Residues 136–186 are required for interaction with KCNK2; the sequence is RVPPDLFRRLTGQFCMIQTLKKGQTYAAEDKTSVDDRLSILLKGKMKVSYR. A phosphoserine mark is found at serine 295 and serine 318. The disordered stretch occupies residues 317 to 360; sequence SSLHVSSPHQRASAKMKPIEEGAEDDDDVFEPASPNTLKVHQLP. A compositionally biased stretch (acidic residues) spans 337–346; sequence EGAEDDDDVF. Positions 350 to 360 are enriched in polar residues; the sequence is SPNTLKVHQLP.

The protein belongs to the popeye family. In terms of assembly, homodimer. Homodimerization requires the C-terminus cytoplasmic region. Interacts (via the C-terminus cytoplasmic tail) with TJP1. Interacts (via the C-terminus cytoplasmic tail) with ARHGEF25/GEFT (via the DH domain). Interacts (via the C-terminus cytoplasmic tail) with VAMP3. Interacts with KCNK2; the interaction enhances KCNK2 surface expression and is inhibited by cAMP. Interacts with CAV3. As to expression, expressed in epithelial cells (at protein level). Expressed in fetal and adult heart and skeletal muscle.

It localises to the lateral cell membrane. Its subcellular location is the cell junction. The protein resides in the tight junction. The protein localises to the membrane. It is found in the cell membrane. It localises to the sarcolemma. Its subcellular location is the caveola. Functionally, cell adhesion molecule involved in the establishment and/or maintenance of cell integrity. Involved in the formation and regulation of the tight junction (TJ) paracellular permeability barrier in epithelial cells. Plays a role in VAMP3-mediated vesicular transport and recycling of different receptor molecules through its interaction with VAMP3. Plays a role in the regulation of cell shape and movement by modulating the Rho-family GTPase activity through its interaction with ARHGEF25/GEFT. Induces primordial adhesive contact and aggregation of epithelial cells in a Ca(2+)-independent manner. Also involved in striated muscle regeneration and repair and in the regulation of cell spreading. Important for the maintenance of cardiac function. Plays a regulatory function in heart rate dynamics mediated, at least in part, through cAMP-binding and, probably, by increasing cell surface expression of the potassium channel KCNK2 and enhancing current density. Is also a caveolae-associated protein important for the preservation of caveolae structural and functional integrity as well as for heart protection against ischemia injury. This Homo sapiens (Human) protein is Popeye domain-containing protein 1.